Here is a 278-residue protein sequence, read N- to C-terminus: Phosphate import ATP-binding protein PstB (278 aa).

The ABC transporter domain maps to 32 to 273; it reads YETRDLNLWY…PSDKRTEDYI (242 aa). 64–71 provides a ligand contact to ATP; it reads GPSGCGKS.

This sequence belongs to the ABC transporter superfamily. Phosphate importer (TC 3.A.1.7) family. The complex is composed of two ATP-binding proteins (PstB), two transmembrane proteins (PstC and PstA) and a solute-binding protein (PstS).

The protein localises to the cell membrane. It carries out the reaction phosphate(out) + ATP + H2O = ADP + 2 phosphate(in) + H(+). Its function is as follows. Part of the ABC transporter complex PstSACB involved in phosphate import. Responsible for energy coupling to the transport system. The sequence is that of Phosphate import ATP-binding protein PstB from Halalkalibacterium halodurans (strain ATCC BAA-125 / DSM 18197 / FERM 7344 / JCM 9153 / C-125) (Bacillus halodurans).